The following is a 243-amino-acid chain: Carboxy-S-adenosyl-L-methionine synthase (243 aa).

S-adenosyl-L-methionine-binding positions include Y40, G65–S67, D90–N91, D118–I119, N133, and R200.

The protein belongs to the class I-like SAM-binding methyltransferase superfamily. Cx-SAM synthase family. Homodimer.

The enzyme catalyses prephenate + S-adenosyl-L-methionine = carboxy-S-adenosyl-L-methionine + 3-phenylpyruvate + H2O. In terms of biological role, catalyzes the conversion of S-adenosyl-L-methionine (SAM) to carboxy-S-adenosyl-L-methionine (Cx-SAM). The protein is Carboxy-S-adenosyl-L-methionine synthase of Shewanella amazonensis (strain ATCC BAA-1098 / SB2B).